Reading from the N-terminus, the 110-residue chain is Large ribosomal subunit protein uL22 (110 aa).

It belongs to the universal ribosomal protein uL22 family. Part of the 50S ribosomal subunit.

In terms of biological role, this protein binds specifically to 23S rRNA; its binding is stimulated by other ribosomal proteins, e.g. L4, L17, and L20. It is important during the early stages of 50S assembly. It makes multiple contacts with different domains of the 23S rRNA in the assembled 50S subunit and ribosome. The globular domain of the protein is located near the polypeptide exit tunnel on the outside of the subunit, while an extended beta-hairpin is found that lines the wall of the exit tunnel in the center of the 70S ribosome. The protein is Large ribosomal subunit protein uL22 of Shewanella amazonensis (strain ATCC BAA-1098 / SB2B).